A 246-amino-acid polypeptide reads, in one-letter code: Probable transcriptional regulatory protein SPO1072 (246 aa).

Positions Met-1 to Ser-22 are disordered.

This sequence belongs to the TACO1 family.

The protein resides in the cytoplasm. This Ruegeria pomeroyi (strain ATCC 700808 / DSM 15171 / DSS-3) (Silicibacter pomeroyi) protein is Probable transcriptional regulatory protein SPO1072.